The chain runs to 357 residues: Sulfate/thiosulfate import ATP-binding protein CysA (357 aa).

In terms of domain architecture, ABC transporter spans 3–237; the sequence is IQIQGVSKQY…PASPFVYDFL (235 aa). 35–42 lines the ATP pocket; the sequence is GPSGSGKT.

Belongs to the ABC transporter superfamily. Sulfate/tungstate importer (TC 3.A.1.6) family. The complex is composed of two ATP-binding proteins (CysA), two transmembrane proteins (CysT and CysW) and a solute-binding protein (CysP).

The protein localises to the cell membrane. It carries out the reaction sulfate(out) + ATP + H2O = sulfate(in) + ADP + phosphate + H(+). The catalysed reaction is thiosulfate(out) + ATP + H2O = thiosulfate(in) + ADP + phosphate + H(+). In terms of biological role, part of the ABC transporter complex CysAWTP involved in sulfate/thiosulfate import. Responsible for energy coupling to the transport system. This is Sulfate/thiosulfate import ATP-binding protein CysA from Bacillus cereus (strain ATCC 10987 / NRS 248).